Here is an 877-residue protein sequence, read N- to C-terminus: Ewing's tumor-associated antigen 1 homolog (877 aa).

The interval 1 to 82 (MQLKDGGTGM…GRSPRGKETP (82 aa)) is disordered. Basic residues predominate over residues 56–65 (AGTRSARRAQ). Residue Lys-87 forms a Glycyl lysine isopeptide (Lys-Gly) (interchain with G-Cter in SUMO2) linkage. The ATR-activation domain (AAD) signature appears at 107-113 (IFWDQNS). Coiled coils occupy residues 185-213 (KTKN…IQEQ) and 306-335 (AFLN…LLTE). Residues Lys-416 and Lys-444 each participate in a glycyl lysine isopeptide (Lys-Gly) (interchain with G-Cter in SUMO2) cross-link. The tract at residues 450-479 (PSKTRNGELRNAGEHRFSSHPGDESRKVPF) is disordered. Positions 454 to 476 (RNGELRNAGEHRFSSHPGDESRK) are enriched in basic and acidic residues. Ser-467 carries the phosphoserine modification. A Glycyl lysine isopeptide (Lys-Gly) (interchain with G-Cter in SUMO2) cross-link involves residue Lys-510. An RBM1 motif motif is present at residues 607–622 (GEVDDDLFCQACDDIE). Disordered regions lie at residues 626 to 664 (QQEN…PSKH) and 818 to 877 (ANQQ…ISLP). Low complexity predominate over residues 637–662 (SVSYTSTRGSRSSSTASKQASQSAPS). A compositionally biased stretch (polar residues) spans 818 to 833 (ANQQQSSINYSESLKP). The span at 840–859 (ERNRKYSPEEIQRKRQEALV) shows a compositional bias: basic and acidic residues. The short motif at 843-865 (RKYSPEEIQRKRQEALVRRKAKA) is the RBM2 motif element. Over residues 868-877 (TVQSAPISLP) the composition is skewed to polar residues.

In terms of assembly, interacts (via RBM1 motif) with RPA1. Interacts (via RBM2 motif) with RPA2. Interacts (via the ATR-activation domain motif) with ATR. In terms of processing, phosphorylated by ATR.

The protein localises to the nucleus. Its function is as follows. Replication stress response protein that accumulates at DNA damage sites and promotes replication fork progression and integrity. Recruited to stalled replication forks via interaction with the RPA complex and directly stimulates ATR kinase activity independently of TOPBP1. Probably only regulates a subset of ATR targets. The protein is Ewing's tumor-associated antigen 1 homolog of Mus musculus (Mouse).